The chain runs to 720 residues: DNA ligase (720 aa).

Residues 60 to 64 (DYDYD), 109 to 110 (SL), and glutamate 140 contribute to the NAD(+) site. The N6-AMP-lysine intermediate role is filled by lysine 142. The NAD(+) site is built by arginine 163 and glutamate 201. A disordered region spans residues 220-239 (GLPPFANPRNAAAGSIRQKD). NAD(+) contacts are provided by lysine 320 and lysine 344. Zn(2+)-binding residues include cysteine 438, cysteine 441, cysteine 456, and cysteine 461. A BRCT domain is found at 619 to 709 (KVADVLKGKT…VDLEKIKKED (91 aa)).

Belongs to the NAD-dependent DNA ligase family. LigA subfamily. Mn(2+) is required as a cofactor. It depends on Mg(2+) as a cofactor.

It carries out the reaction NAD(+) + (deoxyribonucleotide)n-3'-hydroxyl + 5'-phospho-(deoxyribonucleotide)m = (deoxyribonucleotide)n+m + AMP + beta-nicotinamide D-nucleotide.. In terms of biological role, DNA ligase that catalyzes the formation of phosphodiester linkages between 5'-phosphoryl and 3'-hydroxyl groups in double-stranded DNA using NAD as a coenzyme and as the energy source for the reaction. It is essential for DNA replication and repair of damaged DNA. In Aquifex aeolicus (strain VF5), this protein is DNA ligase.